The following is an 842-amino-acid chain: Elongation factor 2 (842 aa).

A tr-type G domain is found at 17–253 (SNVRNMSVIA…LWGENYFNPK (237 aa)). GTP contacts are provided by residues 26-33 (AHVDHGKS), 104-108 (DSPGH), and 158-161 (NKVD). Ser-568 is modified (phosphoserine). Thr-574 carries the post-translational modification Phosphothreonine. The residue at position 699 (His-699) is a Diphthamide.

This sequence belongs to the TRAFAC class translation factor GTPase superfamily. Classic translation factor GTPase family. EF-G/EF-2 subfamily.

The protein localises to the cytoplasm. Catalyzes the GTP-dependent ribosomal translocation step during translation elongation. During this step, the ribosome changes from the pre-translocational (PRE) to the post-translocational (POST) state as the newly formed A-site-bound peptidyl-tRNA and P-site-bound deacylated tRNA move to the P and E sites, respectively. Catalyzes the coordinated movement of the two tRNA molecules, the mRNA and conformational changes in the ribosome. The chain is Elongation factor 2 (eft201) from Schizosaccharomyces pombe (strain 972 / ATCC 24843) (Fission yeast).